A 410-amino-acid polypeptide reads, in one-letter code: MKVYLVGGAVRDRLLGIPVQEQDWVVVGATPEELLKRKYRQVGRDFPVFLHPETKEEYALARTERKSAPGYYGFICDFSESVTLEEDLARRDLTINAMAMDEQGNLIDPYQGQRDLEEKLLRHVSSAFVEDPVRVLRVARFASRFHHLGFRIANETRLLMYSMVKQGELAHLIPERVWQEWQKSLEEKNPEQFILSLRSCDALRVILPEINSLFGVPNPHQYHQEIDTGIHSLMTLRASSELSEEPLVRFAALVHDLGKASTPIQAWPKHHGHEEEGTKLIRALCARLRIPNDYRDLAVTVARAHLNIHRLCELRPNTIVKLLEQVDAFRRPQLFHKILIACQADAESCGKTVVYRQTQLWNEILSECVKVTPQTFIVQGYEGKAIKEAMHQSRVACVERIMTSWKSNEK.

Gly8 and Arg11 together coordinate ATP. Residues Gly8 and Arg11 each contribute to the CTP site. Mg(2+)-binding residues include Glu21 and Asp23. Positions 91, 137, and 140 each coordinate ATP. Positions 91, 137, and 140 each coordinate CTP. The HD domain occupies 228–329 (TGIHSLMTLR…VKLLEQVDAF (102 aa)).

The protein belongs to the tRNA nucleotidyltransferase/poly(A) polymerase family. Bacterial CCA-adding enzyme type 1 subfamily. As to quaternary structure, monomer. Can also form homodimers and oligomers. The cofactor is Mg(2+). It depends on Ni(2+) as a cofactor.

The catalysed reaction is a tRNA precursor + 2 CTP + ATP = a tRNA with a 3' CCA end + 3 diphosphate. It carries out the reaction a tRNA with a 3' CCA end + 2 CTP + ATP = a tRNA with a 3' CCACCA end + 3 diphosphate. Its function is as follows. Catalyzes the addition and repair of the essential 3'-terminal CCA sequence in tRNAs without using a nucleic acid template. Adds these three nucleotides in the order of C, C, and A to the tRNA nucleotide-73, using CTP and ATP as substrates and producing inorganic pyrophosphate. tRNA 3'-terminal CCA addition is required both for tRNA processing and repair. Also involved in tRNA surveillance by mediating tandem CCA addition to generate a CCACCA at the 3' terminus of unstable tRNAs. While stable tRNAs receive only 3'-terminal CCA, unstable tRNAs are marked with CCACCA and rapidly degraded. This is Multifunctional CCA protein from Legionella pneumophila subsp. pneumophila (strain Philadelphia 1 / ATCC 33152 / DSM 7513).